A 126-amino-acid polypeptide reads, in one-letter code: Holo-[acyl-carrier-protein] synthase (126 aa).

Residues Asp-9 and Glu-58 each coordinate Mg(2+).

This sequence belongs to the P-Pant transferase superfamily. AcpS family. Mg(2+) serves as cofactor.

The protein resides in the cytoplasm. The enzyme catalyses apo-[ACP] + CoA = holo-[ACP] + adenosine 3',5'-bisphosphate + H(+). Transfers the 4'-phosphopantetheine moiety from coenzyme A to a Ser of acyl-carrier-protein. The sequence is that of Holo-[acyl-carrier-protein] synthase from Escherichia coli (strain K12 / MC4100 / BW2952).